Here is a 211-residue protein sequence, read N- to C-terminus: Metalloproteinase inhibitor 3 (211 aa).

Positions Met1–Ala23 are cleaved as a signal peptide. Cys24 lines the Zn(2+) pocket. Involved in metalloproteinase-binding regions lie at residues Cys24–Ser27 and Glu88–Ser89. Cystine bridges form between Cys24–Cys91, Cys26–Cys118, Cys36–Cys143, Cys145–Cys192, Cys150–Cys155, and Cys163–Cys184. Residues Cys24 to Cys143 form the NTR domain. The segment at Thr105 to Lys188 is mediates interaction with EFEMP1. Asn207 carries an N-linked (GlcNAc...) asparagine glycan.

It belongs to the protease inhibitor I35 (TIMP) family. In terms of assembly, interacts with EFEMP1. Interacts with KDR.

Its subcellular location is the secreted. The protein resides in the extracellular space. It is found in the extracellular matrix. Its function is as follows. Mediates a variety of processes including matrix regulation and turnover, inflammation, and angiogenesis, through reversible inhibition of zinc protease superfamily enzymes, primarily matrix metalloproteinases (MMPs). Regulates extracellular matrix (ECM) remodeling through inhibition of matrix metalloproteinases (MMP) including MMP-1, MMP-2, MMP-3, MMP-7, MMP-9, MMP-13, MMP-14 and MMP-15. Additionally, modulates the processing of amyloid precursor protein (APP) and apolipoprotein E receptor ApoER2 by inhibiting two alpha-secretases ADAM10 and ADAM17. Functions as a tumor suppressor and a potent inhibitor of angiogenesis. Exerts its anti-angiogenic effect by directly interacting with vascular endothelial growth factor (VEGF) receptor-2/KDR, preventing its binding to the VEGFA ligand. Selectively induces apoptosis in angiogenic endothelial cells through a caspase-independent cell death pathway. Mechanistically, inhibits matrix-induced focal adhesion kinase PTK2 tyrosine phosphorylation and association with paxillin/PXN and disrupts the incorporation of ITGB3, PTK2 and PXN into focal adhesion contacts on the matrix. The sequence is that of Metalloproteinase inhibitor 3 (TIMP3) from Bos taurus (Bovine).